The primary structure comprises 252 residues: D-aminoacyl-tRNA deacylase (252 aa).

This sequence belongs to the DtdA deacylase family. Monomer. The cofactor is Zn(2+).

It catalyses the reaction a D-aminoacyl-tRNA + H2O = a tRNA + a D-alpha-amino acid + H(+). The catalysed reaction is glycyl-tRNA(Ala) + H2O = tRNA(Ala) + glycine + H(+). Functionally, D-aminoacyl-tRNA deacylase with broad substrate specificity. By recycling D-aminoacyl-tRNA to D-amino acids and free tRNA molecules, this enzyme counteracts the toxicity associated with the formation of D-aminoacyl-tRNA entities in vivo. This Pyrobaculum neutrophilum (strain DSM 2338 / JCM 9278 / NBRC 100436 / V24Sta) (Thermoproteus neutrophilus) protein is D-aminoacyl-tRNA deacylase.